A 110-amino-acid polypeptide reads, in one-letter code: uncharacterized protein (110 aa).

This is an uncharacterized protein from Yersinia enterocolitica.